Here is a 184-residue protein sequence, read N- to C-terminus: Alpha-tubulin N-acetyltransferase (184 aa).

Positions 1–170 (METFNHIDIK…NHFVIFSNYF (170 aa)) constitute an N-acetyltransferase domain. Acetyl-CoA contacts are provided by residues 104 to 117 (FYILEKFQKRGLGI) and 140 to 149 (SYKLQNFLKK).

Belongs to the acetyltransferase ATAT1 family.

The enzyme catalyses L-lysyl-[alpha-tubulin] + acetyl-CoA = N(6)-acetyl-L-lysyl-[alpha-tubulin] + CoA + H(+). Its function is as follows. Specifically acetylates 'Lys-40' in alpha-tubulin on the lumenal side of microtubules. Promotes microtubule destabilization and accelerates microtubule dynamics; this activity may be independent of acetylation activity. Acetylates alpha-tubulin with a slow enzymatic rate, due to a catalytic site that is not optimized for acetyl transfer. Enters the microtubule through each end and diffuses quickly throughout the lumen of microtubules. Acetylates only long/old microtubules because of its slow acetylation rate since it does not have time to act on dynamically unstable microtubules before the enzyme is released. The protein is Alpha-tubulin N-acetyltransferase of Plasmodium falciparum (isolate 3D7).